A 423-amino-acid chain; its full sequence is Ferrochelatase, mitochondrial (423 aa).

The transit peptide at methionine 1–methionine 40 directs the protein to the mitochondrion. Position 200 (cysteine 200) interacts with [2Fe-2S] cluster. Aspartate 385 is a catalytic residue. Positions 405, 408, and 413 each coordinate [2Fe-2S] cluster.

It belongs to the ferrochelatase family. Monomer. Requires [2Fe-2S] cluster as cofactor.

It is found in the mitochondrion inner membrane. Its subcellular location is the cytoplasm. The protein localises to the nucleus. The enzyme catalyses heme b + 2 H(+) = protoporphyrin IX + Fe(2+). The protein operates within porphyrin-containing compound metabolism; protoheme biosynthesis; protoheme from protoporphyrin-IX: step 1/1. In terms of biological role, catalyzes the ferrous insertion into protoporphyrin IX. This is Ferrochelatase, mitochondrial (hem15) from Schizosaccharomyces pombe (strain 972 / ATCC 24843) (Fission yeast).